Consider the following 197-residue polypeptide: Cyclin-dependent kinase inhibitor 1B (197 aa).

Residues 1 to 11 (MSNVRVSNGSP) are compositionally biased toward polar residues. A disordered region spans residues 1-34 (MSNVRVSNGSPSLERMDARQAEHPKPSACRNLFG). Position 10 is a phosphoserine; by UHMK1 (S10). Residues 14–25 (ERMDARQAEHPK) show a composition bias toward basic and acidic residues. The tract at residues 51–91 (DMEEASQRKWNFDFQNHKPLEGRYEWQEVERGSLPEFYYRP) is interaction with CDK2. Y74 is subject to Phosphotyrosine; by SRC. A disordered region spans residues 86 to 197 (EFYYRPPRPP…PKKPGLRRQT (112 aa)). Position 88 is a phosphotyrosine; by ABL, LYN, SRC and JAK2 (Y88). Y89 carries the phosphotyrosine modification. Positions 104–113 (QESQDVSGSR) are enriched in polar residues. Residues 153–169 (KRPAAEDSSSQNKRANR) carry the Nuclear localization signal motif. T170 carries the phosphothreonine; by CaMK1 modification. Residues 175-186 (SDGSPNAGTVEQ) show a composition bias toward polar residues. T187 carries the phosphothreonine; by PKB/AKT1, CDK1 and CDK2 modification. T197 is modified (phosphothreonine; by CaMK1, PKB/AKT1, RPS6KA1, RPS6KA3 and PIM1).

It belongs to the CDI family. As to quaternary structure, forms a ternary complex composed of CCNE1, CDK2 and CDKN1B. Interacts directly with CCNE1; the interaction is inhibited by CDK2-dependent phosphorylation on Thr-187. Interacts with COPS5, subunit of the COP9 signalosome complex; the interaction leads to CDKN1B degradation. Interacts with NUP50; the interaction leads to nuclear import and degradation of phosphorylated CDKN1B. Interacts with CCND1 and SNX6. Interacts (Thr-197-phosphorylated form) with 14-3-3 proteins, binds strongly YWHAQ, weakly YWHAE and YWHAH, but not YWHAB nor YWHAZ; the interaction with YWHAQ results in translocation to the cytoplasm. Interacts with AKT1 and LYN; the interactions lead to cytoplasmic mislocation, phosphorylation of CDKN1B and inhibition of cell cycle arrest. Forms a ternary complex with CCNA2 and CDK2; CDKN1B inhibits the kinase activity of CDK2 through conformational rearrangements. Interacts (unphosphorylated form) with CDK2. Forms a complex with CDK2 and SPDYA, but does not directly interact with SPDYA. Forms a ternary complex composed of cyclin D, CDK4 and CDKN1B. Interacts (phosphorylated on Tyr-88 and Tyr-89) with CDK4; the interaction is required for cyclin D and CDK4 complex assembly, induces nuclear translocation and activates the CDK4 kinase activity. Interacts with GRB2. Interacts with PIM1. Identified in a complex with SKP1, SKP2 and CKS1B. Interacts with UHMK1; the interaction leads to cytoplasmic mislocation, phosphorylation of CDKN1B and inhibition of cell cycle arrest. Also interacts with CDK1. Dephosphorylated on Thr-187 by PPM1H, leading to CDKN1B stability. In terms of processing, phosphorylated; phosphorylation occurs on serine, threonine and tyrosine residues. Phosphorylation on Ser-10 is the major site of phosphorylation in resting cells, takes place at the G(0)-G(1) phase and leads to protein stability. Phosphorylation on other sites is greatly enhanced by mitogens, growth factors, MYC and in certain cancer cell lines. The phosphorylated form found in the cytoplasm is inactivate. Phosphorylation on Thr-197 is required for interaction with 14-3-3 proteins. Phosphorylation on Thr-187, by CDK1 and CDK2 leads to protein ubiquitination and proteasomal degradation. Tyrosine phosphorylation promotes this process. Phosphorylation by PKB/AKT1 can be suppressed by LY294002, an inhibitor of the catalytic subunit of PI3K. Phosphorylation on Tyr-88 and Tyr-89 has no effect on binding CDK2, but is required for binding CDK4. Dephosphorylated on tyrosine residues by G-CSF. Dephosphorylated on Thr-187 by PPM1H, leading to CDKN1B stability. Post-translationally, ubiquitinated; in the cytoplasm by the KPC complex (composed of RNF123/KPC1 and UBAC1/KPC2) and, in the nucleus, by SCF(SKP2). The latter requires prior phosphorylation on Thr-187. Ubiquitinated; by a TRIM21-containing SCF(SKP2)-like complex; leads to its degradation. Subject to degradation in the lysosome. Interaction with SNX6 promotes lysosomal degradation.

The protein localises to the nucleus. It is found in the cytoplasm. It localises to the endosome. Functionally, important regulator of cell cycle progression. Inhibits the kinase activity of CDK2 bound to cyclin A, but has little inhibitory activity on CDK2 bound to SPDYA. Involved in G1 arrest. Potent inhibitor of cyclin E- and cyclin A-CDK2 complexes. Forms a complex with cyclin type D-CDK4 complexes and is involved in the assembly, stability, and modulation of CCND1-CDK4 complex activation. Acts either as an inhibitor or an activator of cyclin type D-CDK4 complexes depending on its phosphorylation state and/or stoichometry. In Mus musculus (Mouse), this protein is Cyclin-dependent kinase inhibitor 1B (Cdkn1b).